Reading from the N-terminus, the 222-residue chain is Ras-related protein Rab11C (222 aa).

22–29 (GDSAVGKT) contributes to the GTP binding site. Positions 44–52 (SKATIGVEF) match the Effector region motif. Residues 70–74 (DTAGQ) and 128–131 (NKTD) contribute to the GTP site. S-geranylgeranyl cysteine attachment occurs at residues Cys-219 and Cys-220.

This sequence belongs to the small GTPase superfamily. Rab family.

The protein localises to the cell membrane. The protein is Ras-related protein Rab11C (RAB11C) of Nicotiana tabacum (Common tobacco).